The chain runs to 460 residues: Cysteine--tRNA ligase (460 aa).

Cysteine 28 contacts Zn(2+). The short motif at 30–40 (MTVYDYCHLGH) is the 'HIGH' region element. Zn(2+) is bound by residues cysteine 209, histidine 234, and glutamate 238. Positions 266–270 (KMSKS) match the 'KMSKS' region motif. Residue lysine 269 participates in ATP binding.

The protein belongs to the class-I aminoacyl-tRNA synthetase family. Monomer. Requires Zn(2+) as cofactor.

It is found in the cytoplasm. It catalyses the reaction tRNA(Cys) + L-cysteine + ATP = L-cysteinyl-tRNA(Cys) + AMP + diphosphate. The chain is Cysteine--tRNA ligase from Pseudomonas putida (strain ATCC 700007 / DSM 6899 / JCM 31910 / BCRC 17059 / LMG 24140 / F1).